Here is a 123-residue protein sequence, read N- to C-terminus: Signal recognition particle 14 kDa protein (123 aa).

The disordered stretch occupies residues 99–123 (KKKPTPTTTPSSSTTAKTAAKKTKV). The span at 103–116 (TPTTTPSSSTTAKT) shows a compositional bias: low complexity.

The protein belongs to the SRP14 family. As to quaternary structure, heterodimer with srp9; binds RNA as heterodimer. Component of a signal recognition particle (SRP) complex that consists of a 7SL RNA molecule and six protein subunits: srp72, srp68, srp54, srp19, srp14 and srp9.

Its subcellular location is the cytoplasm. Component of the signal recognition particle (SRP) complex, a ribonucleoprotein complex that mediates the cotranslational targeting of secretory and membrane proteins to the endoplasmic reticulum (ER). Srp9 together with srp14 and the Alu portion of the SRP RNA, constitutes the elongation arrest domain of SRP. The complex of srp9 and srp14 is required for SRP RNA binding. The protein is Signal recognition particle 14 kDa protein (srp14-1) of Dictyostelium discoideum (Social amoeba).